The chain runs to 567 residues: Cytochrome P450 monooxygenase 79 (567 aa).

A helical membrane pass occupies residues 7-24; sequence ELAILAIVLLVTAVVFYT. N-linked (GlcNAc...) asparagine glycosylation is found at Asn-223 and Asn-279. Cys-475 serves as a coordination point for heme.

The protein belongs to the cytochrome P450 family. Heme serves as cofactor.

The protein resides in the membrane. Its pathway is secondary metabolite biosynthesis. Its function is as follows. Cytochrome P450 monooxygenase that is able to use dehydroabietic acid as a substrate for oxidation. The chain is Cytochrome P450 monooxygenase 79 from Postia placenta (strain ATCC 44394 / Madison 698-R) (Brown rot fungus).